A 343-amino-acid polypeptide reads, in one-letter code: Vancomycin/teicoplanin A-type resistance protein VanA (343 aa).

ATP contacts are provided by residues Lys-133, 169–171 (FVK), 177–178 (SS), 207–214 (EQAVSGCE), and Phe-241. In terms of domain architecture, ATP-grasp spans 137–338 (YIVAKNAGIA…LPELIDRLIV (202 aa)). His-244 contributes to the substrate binding site. ATP is bound at residue 304–305 (NE). Residues Glu-305 and Asn-307 each coordinate Mg(2+).

It belongs to the D-alanine--D-alanine ligase family. Mg(2+) serves as cofactor. Requires Mn(2+) as cofactor.

The protein resides in the cell membrane. It carries out the reaction (R)-lactate + D-alanine + ATP = D-alanyl-(R)-lactate + ADP + phosphate. Functionally, required for high-level resistance to glycopeptide antibiotics. D-Ala--D-Ala ligase of altered specificity which catalyzes ester bond formation between D-Ala and various D-hydroxy acids; produces a peptidoglycan which does not terminate in D-alanine but in D-lactate, thus preventing vancomycin or teicoplanin binding. This chain is Vancomycin/teicoplanin A-type resistance protein VanA (vanA), found in Enterococcus faecium (Streptococcus faecium).